The sequence spans 477 residues: Probable glycine dehydrogenase (decarboxylating) subunit 2 (477 aa).

K264 is subject to N6-(pyridoxal phosphate)lysine.

The protein belongs to the GcvP family. C-terminal subunit subfamily. As to quaternary structure, the glycine cleavage system is composed of four proteins: P, T, L and H. In this organism, the P 'protein' is a heterodimer of two subunits. The cofactor is pyridoxal 5'-phosphate.

The enzyme catalyses N(6)-[(R)-lipoyl]-L-lysyl-[glycine-cleavage complex H protein] + glycine + H(+) = N(6)-[(R)-S(8)-aminomethyldihydrolipoyl]-L-lysyl-[glycine-cleavage complex H protein] + CO2. In terms of biological role, the glycine cleavage system catalyzes the degradation of glycine. The P protein binds the alpha-amino group of glycine through its pyridoxal phosphate cofactor; CO(2) is released and the remaining methylamine moiety is then transferred to the lipoamide cofactor of the H protein. This is Probable glycine dehydrogenase (decarboxylating) subunit 2 from Fervidobacterium nodosum (strain ATCC 35602 / DSM 5306 / Rt17-B1).